Consider the following 259-residue polypeptide: Thiazole synthase (259 aa).

The Schiff-base intermediate with DXP role is filled by Lys99. Residues Gly161, 187–188 (AG), and 209–210 (NT) each bind 1-deoxy-D-xylulose 5-phosphate.

The protein belongs to the ThiG family. As to quaternary structure, homotetramer. Forms heterodimers with either ThiH or ThiS.

It is found in the cytoplasm. The enzyme catalyses [ThiS sulfur-carrier protein]-C-terminal-Gly-aminoethanethioate + 2-iminoacetate + 1-deoxy-D-xylulose 5-phosphate = [ThiS sulfur-carrier protein]-C-terminal Gly-Gly + 2-[(2R,5Z)-2-carboxy-4-methylthiazol-5(2H)-ylidene]ethyl phosphate + 2 H2O + H(+). It participates in cofactor biosynthesis; thiamine diphosphate biosynthesis. In terms of biological role, catalyzes the rearrangement of 1-deoxy-D-xylulose 5-phosphate (DXP) to produce the thiazole phosphate moiety of thiamine. Sulfur is provided by the thiocarboxylate moiety of the carrier protein ThiS. In vitro, sulfur can be provided by H(2)S. The protein is Thiazole synthase of Nitratiruptor sp. (strain SB155-2).